A 160-amino-acid polypeptide reads, in one-letter code: uncharacterized protein (160 aa).

This is an uncharacterized protein from Magallana gigas (Pacific oyster).